Here is a 78-residue protein sequence, read N- to C-terminus: Toxin OAIP 5 (78 aa).

The signal sequence occupies residues 1–19 (MLIVILTCALLVIYHAAAA). Residues 20 to 40 (EELEAKDVIESKALATLDEER) constitute a propeptide that is removed on maturation. 3 disulfide bridges follow: Cys-43/Cys-56, Cys-47/Cys-70, and Cys-64/Cys-75.

This sequence belongs to the neurotoxin 12 (Hwtx-2) family. 05 (OAIP-5) subfamily. As to expression, expressed by the venom gland.

Its subcellular location is the secreted. Its function is as follows. Probable ion channel inhibitor. Shows insecticidal activity when injected into mealworms. This is Toxin OAIP 5 from Selenotypus plumipes (Australian featherleg tarantula).